The primary structure comprises 425 residues: Glutamate-1-semialdehyde 2,1-aminomutase (425 aa).

An N6-(pyridoxal phosphate)lysine modification is found at Lys-265.

It belongs to the class-III pyridoxal-phosphate-dependent aminotransferase family. HemL subfamily. In terms of assembly, homodimer. It depends on pyridoxal 5'-phosphate as a cofactor.

The protein resides in the cytoplasm. It carries out the reaction (S)-4-amino-5-oxopentanoate = 5-aminolevulinate. It functions in the pathway porphyrin-containing compound metabolism; protoporphyrin-IX biosynthesis; 5-aminolevulinate from L-glutamyl-tRNA(Glu): step 2/2. The chain is Glutamate-1-semialdehyde 2,1-aminomutase from Thiobacillus denitrificans (strain ATCC 25259 / T1).